The following is a 327-amino-acid chain: DNA-directed RNA polymerase subunit alpha (327 aa).

The alpha N-terminal domain (alpha-NTD) stretch occupies residues 1 to 233; it reads MQGSVTEFLK…EQLEAFVDLR (233 aa). Residues 247-327 form an alpha C-terminal domain (alpha-CTD) region; sequence FDPVLLRPVD…NWPPLGFIDK (81 aa).

It belongs to the RNA polymerase alpha chain family. In terms of assembly, homodimer. The RNAP catalytic core consists of 2 alpha, 1 beta, 1 beta' and 1 omega subunit. When a sigma factor is associated with the core the holoenzyme is formed, which can initiate transcription.

The catalysed reaction is RNA(n) + a ribonucleoside 5'-triphosphate = RNA(n+1) + diphosphate. Functionally, DNA-dependent RNA polymerase catalyzes the transcription of DNA into RNA using the four ribonucleoside triphosphates as substrates. The chain is DNA-directed RNA polymerase subunit alpha from Baumannia cicadellinicola subsp. Homalodisca coagulata.